Reading from the N-terminus, the 336-residue chain is Phosphatidylglycerol--prolipoprotein diacylglyceryl transferase (336 aa).

3 helical membrane passes run 16-36 (IGPVTIHFYALCILLGIVLAV), 53-73 (ILDITLVAVPSGIIGARIYHI), and 93-113 (IWNGGLGIWGGVLLGALAAWA). Arg141 is a binding site for a 1,2-diacyl-sn-glycero-3-phospho-(1'-sn-glycerol). The next 3 helical transmembrane spans lie at 190-210 (PTFLYEMIWNLIGAALIVFLG), 220-240 (GSLFAIYIMWYTVGRTWIEAL), and 253-273 (INVWVSMAVFVLGVVAFIVIQ).

Belongs to the Lgt family.

It is found in the cell membrane. It carries out the reaction L-cysteinyl-[prolipoprotein] + a 1,2-diacyl-sn-glycero-3-phospho-(1'-sn-glycerol) = an S-1,2-diacyl-sn-glyceryl-L-cysteinyl-[prolipoprotein] + sn-glycerol 1-phosphate + H(+). It participates in protein modification; lipoprotein biosynthesis (diacylglyceryl transfer). Its function is as follows. Catalyzes the transfer of the diacylglyceryl group from phosphatidylglycerol to the sulfhydryl group of the N-terminal cysteine of a prolipoprotein, the first step in the formation of mature lipoproteins. The polypeptide is Phosphatidylglycerol--prolipoprotein diacylglyceryl transferase (Bifidobacterium adolescentis (strain ATCC 15703 / DSM 20083 / NCTC 11814 / E194a)).